Here is a 256-residue protein sequence, read N- to C-terminus: Thiazole synthase (256 aa).

Catalysis depends on Lys-96, which acts as the Schiff-base intermediate with DXP. 1-deoxy-D-xylulose 5-phosphate contacts are provided by residues Gly-157, Ala-183–Gly-184, and Asn-205–Thr-206.

This sequence belongs to the ThiG family. In terms of assembly, homotetramer. Forms heterodimers with either ThiH or ThiS.

The protein resides in the cytoplasm. The enzyme catalyses [ThiS sulfur-carrier protein]-C-terminal-Gly-aminoethanethioate + 2-iminoacetate + 1-deoxy-D-xylulose 5-phosphate = [ThiS sulfur-carrier protein]-C-terminal Gly-Gly + 2-[(2R,5Z)-2-carboxy-4-methylthiazol-5(2H)-ylidene]ethyl phosphate + 2 H2O + H(+). The protein operates within cofactor biosynthesis; thiamine diphosphate biosynthesis. Catalyzes the rearrangement of 1-deoxy-D-xylulose 5-phosphate (DXP) to produce the thiazole phosphate moiety of thiamine. Sulfur is provided by the thiocarboxylate moiety of the carrier protein ThiS. In vitro, sulfur can be provided by H(2)S. The protein is Thiazole synthase of Clostridioides difficile (strain 630) (Peptoclostridium difficile).